The primary structure comprises 776 residues: Ion-translocating oxidoreductase complex subunit C (776 aa).

4Fe-4S ferredoxin-type domains are found at residues Met368–Tyr397 and Lys407–Phe436. Positions 377, 380, 383, 387, 416, 419, 422, and 426 each coordinate [4Fe-4S] cluster. Composition is skewed to basic and acidic residues over residues Ala534–Gln543, Ala597–Ala611, Ala633–Ala647, Ala669–Ala683, and Ala705–Thr719. Positions Ala534–Ala754 are disordered. Residues Glu721–Asn743 are compositionally biased toward low complexity.

Belongs to the 4Fe4S bacterial-type ferredoxin family. RnfC subfamily. In terms of assembly, the complex is composed of six subunits: RnfA, RnfB, RnfC, RnfD, RnfE and RnfG. [4Fe-4S] cluster is required as a cofactor.

The protein resides in the cell inner membrane. Functionally, part of a membrane-bound complex that couples electron transfer with translocation of ions across the membrane. This chain is Ion-translocating oxidoreductase complex subunit C, found in Cronobacter sakazakii (strain ATCC BAA-894) (Enterobacter sakazakii).